A 118-amino-acid chain; its full sequence is Large ribosomal subunit protein bL19 (118 aa).

Belongs to the bacterial ribosomal protein bL19 family.

This protein is located at the 30S-50S ribosomal subunit interface and may play a role in the structure and function of the aminoacyl-tRNA binding site. This Helicobacter hepaticus (strain ATCC 51449 / 3B1) protein is Large ribosomal subunit protein bL19.